The primary structure comprises 79 residues: MSEIGERVKKIVVEHLGVEPEKVVDGASFIDDLGADSLDTVELVMAFEEEFGCEIPDDAAETILTVGDATKFLEKNAKS.

The Carrier domain occupies 2–77 (SEIGERVKKI…DATKFLEKNA (76 aa)). Ser37 carries the O-(pantetheine 4'-phosphoryl)serine modification.

The protein belongs to the acyl carrier protein (ACP) family. Post-translationally, 4'-phosphopantetheine is transferred from CoA to a specific serine of apo-ACP by AcpS. This modification is essential for activity because fatty acids are bound in thioester linkage to the sulfhydryl of the prosthetic group.

Its subcellular location is the cytoplasm. It participates in lipid metabolism; fatty acid biosynthesis. Functionally, carrier of the growing fatty acid chain in fatty acid biosynthesis. This Rhodopseudomonas palustris (strain HaA2) protein is Acyl carrier protein.